A 228-amino-acid polypeptide reads, in one-letter code: Probable septum site-determining protein MinC (228 aa).

This sequence belongs to the MinC family. In terms of assembly, interacts with MinD and FtsZ.

Its function is as follows. Cell division inhibitor that blocks the formation of polar Z ring septums. Rapidly oscillates between the poles of the cell to destabilize FtsZ filaments that have formed before they mature into polar Z rings. Prevents FtsZ polymerization. The polypeptide is Probable septum site-determining protein MinC (Bacillus cereus (strain G9842)).